The following is a 187-amino-acid chain: Photosystem I assembly protein Ycf4 (187 aa).

A run of 2 helical transmembrane segments spans residues 25 to 45 (YLWA…GISS) and 69 to 89 (MSFY…TVIW).

This sequence belongs to the Ycf4 family.

It localises to the cellular thylakoid membrane. Seems to be required for the assembly of the photosystem I complex. The protein is Photosystem I assembly protein Ycf4 of Trichodesmium erythraeum (strain IMS101).